Here is a 431-residue protein sequence, read N- to C-terminus: tRNA(Ile)-lysidine synthase (431 aa).

19–24 lines the ATP pocket; it reads STGIDS.

This sequence belongs to the tRNA(Ile)-lysidine synthase family.

It localises to the cytoplasm. The enzyme catalyses cytidine(34) in tRNA(Ile2) + L-lysine + ATP = lysidine(34) in tRNA(Ile2) + AMP + diphosphate + H(+). Functionally, ligates lysine onto the cytidine present at position 34 of the AUA codon-specific tRNA(Ile) that contains the anticodon CAU, in an ATP-dependent manner. Cytidine is converted to lysidine, thus changing the amino acid specificity of the tRNA from methionine to isoleucine. The polypeptide is tRNA(Ile)-lysidine synthase (Staphylococcus aureus (strain COL)).